Reading from the N-terminus, the 585-residue chain is Protein NRT1/ PTR FAMILY 8.3 (585 aa).

Position 2 is an N-acetylglycine (glycine 2). A helical transmembrane segment spans residues 91–111 (WQGTCYLTPLIGAVLADAYWG). Threonine 115 carries the phosphothreonine modification. The next 10 membrane-spanning stretches (helical) occupy residues 116–136 (IACF…SASV), 154–174 (PAQY…TGGI), 200–220 (FFNW…SLLV), 228–248 (WGLG…SFFF), 351–371 (FPIW…STMF), 387–407 (LPPA…VPLY), 431–451 (MGIG…VEII), 472–492 (VLWQ…YFIG), 511–531 (ALAL…LTLV), and 556–576 (FFWL…FSAA).

It belongs to the major facilitator superfamily. Proton-dependent oligopeptide transporter (POT/PTR) (TC 2.A.17) family. In terms of tissue distribution, highly expressed in young leaves, roots and germinating seeds, intermediately in stems, flowers and mature leaves and at low level in siliques.

It is found in the vacuole membrane. Its activity is regulated as follows. Inhibited by leucyl-ethionine. In terms of biological role, peptide transporter. Mediates the transport of di- and tripeptides. High affinity, low capacity transporter. Can also transport histidine. This Arabidopsis thaliana (Mouse-ear cress) protein is Protein NRT1/ PTR FAMILY 8.3 (NPF8.3).